The primary structure comprises 414 residues: Gamma-glutamyl phosphate reductase (414 aa).

It belongs to the gamma-glutamyl phosphate reductase family.

The protein localises to the cytoplasm. It catalyses the reaction L-glutamate 5-semialdehyde + phosphate + NADP(+) = L-glutamyl 5-phosphate + NADPH + H(+). Its pathway is amino-acid biosynthesis; L-proline biosynthesis; L-glutamate 5-semialdehyde from L-glutamate: step 2/2. In terms of biological role, catalyzes the NADPH-dependent reduction of L-glutamate 5-phosphate into L-glutamate 5-semialdehyde and phosphate. The product spontaneously undergoes cyclization to form 1-pyrroline-5-carboxylate. The protein is Gamma-glutamyl phosphate reductase of Caldanaerobacter subterraneus subsp. tengcongensis (strain DSM 15242 / JCM 11007 / NBRC 100824 / MB4) (Thermoanaerobacter tengcongensis).